We begin with the raw amino-acid sequence, 331 residues long: Ketol-acid reductoisomerase (NADP(+)) (331 aa).

The 181-residue stretch at A2–T182 folds into the KARI N-terminal Rossmann domain. NADP(+)-binding positions include Y25–Q28, S51, S53, and D83–Q86. Residue H108 is part of the active site. G134 serves as a coordination point for NADP(+). The 146-residue stretch at T183–L328 folds into the KARI C-terminal knotted domain. Positions 191, 195, 227, and 231 each coordinate Mg(2+). Substrate is bound at residue S252.

The protein belongs to the ketol-acid reductoisomerase family. As to quaternary structure, homooctamer. Mg(2+) serves as cofactor.

It carries out the reaction (2R)-2,3-dihydroxy-3-methylbutanoate + NADP(+) = (2S)-2-acetolactate + NADPH + H(+). It catalyses the reaction (2R,3R)-2,3-dihydroxy-3-methylpentanoate + NADP(+) = (S)-2-ethyl-2-hydroxy-3-oxobutanoate + NADPH + H(+). It functions in the pathway amino-acid biosynthesis; L-isoleucine biosynthesis; L-isoleucine from 2-oxobutanoate: step 2/4. Its pathway is amino-acid biosynthesis; L-valine biosynthesis; L-valine from pyruvate: step 2/4. Functionally, involved in the biosynthesis of branched-chain amino acids (BCAA). Catalyzes an alkyl-migration followed by a ketol-acid reduction of (S)-2-acetolactate (S2AL) to yield (R)-2,3-dihydroxy-isovalerate. In the isomerase reaction, S2AL is rearranged via a Mg-dependent methyl migration to produce 3-hydroxy-3-methyl-2-ketobutyrate (HMKB). In the reductase reaction, this 2-ketoacid undergoes a metal-dependent reduction by NADPH to yield (R)-2,3-dihydroxy-isovalerate. The sequence is that of Ketol-acid reductoisomerase (NADP(+)) from Synechocystis sp. (strain ATCC 27184 / PCC 6803 / Kazusa).